A 698-amino-acid chain; its full sequence is Elongation factor G (698 aa).

One can recognise a tr-type G domain in the interval 8–290; that stretch reads ERYRNIGISA…AVIELLPSPV (283 aa). GTP is bound by residues 17 to 24, 88 to 92, and 142 to 145; these read AHIDAGKT, DTPGH, and NKMD.

It belongs to the TRAFAC class translation factor GTPase superfamily. Classic translation factor GTPase family. EF-G/EF-2 subfamily.

It localises to the cytoplasm. Functionally, catalyzes the GTP-dependent ribosomal translocation step during translation elongation. During this step, the ribosome changes from the pre-translocational (PRE) to the post-translocational (POST) state as the newly formed A-site-bound peptidyl-tRNA and P-site-bound deacylated tRNA move to the P and E sites, respectively. Catalyzes the coordinated movement of the two tRNA molecules, the mRNA and conformational changes in the ribosome. This Aromatoleum aromaticum (strain DSM 19018 / LMG 30748 / EbN1) (Azoarcus sp. (strain EbN1)) protein is Elongation factor G.